We begin with the raw amino-acid sequence, 801 residues long: PR domain zinc finger protein 4 (801 aa).

The SET domain occupies lysine 412–serine 529. The C2H2-type 1; atypical zinc-finger motif lies at histidine 545–histidine 566. 4 C2H2-type zinc fingers span residues histidine 618–histidine 640, tyrosine 646–histidine 668, leucine 674–histidine 696, and isoleucine 702–histidine 724. A C2H2-type 6; atypical zinc finger spans residues tyrosine 730–cysteine 752. Residues threonine 751–glutamate 782 form a disordered region. Residues proline 762 to alanine 776 are compositionally biased toward acidic residues.

It belongs to the class V-like SAM-binding methyltransferase superfamily. In terms of tissue distribution, expressed in many tissues. Highly expressed in ovary, testis, pancreas, brain, heart and prostate.

The protein localises to the nucleus. May function as a transcription factor involved in cell differentiation. In Homo sapiens (Human), this protein is PR domain zinc finger protein 4 (PRDM4).